Reading from the N-terminus, the 211-residue chain is Ribonuclease HII (211 aa).

The RNase H type-2 domain occupies 16 to 205 (APVCGVDEAG…VKAALAAAAV (190 aa)). A divalent metal cation is bound by residues D22, E23, and D114.

Belongs to the RNase HII family. It depends on Mn(2+) as a cofactor. The cofactor is Mg(2+).

The protein localises to the cytoplasm. It carries out the reaction Endonucleolytic cleavage to 5'-phosphomonoester.. In terms of biological role, endonuclease that specifically degrades the RNA of RNA-DNA hybrids. This chain is Ribonuclease HII (rnhB), found in Caulobacter vibrioides (strain ATCC 19089 / CIP 103742 / CB 15) (Caulobacter crescentus).